Reading from the N-terminus, the 163-residue chain is Probable calcium-binding protein CML26 (163 aa).

Residue Ala-2 is modified to N-acetylalanine. EF-hand domains follow at residues 16-51 (STDM…MGTS), 52-82 (YTEE…TICR), 85-120 (SSAV…LGMT), and 121-156 (CSVE…PELV). Ca(2+) is bound by residues Asp-29, Asn-31, Asp-33, Lys-35, Glu-40, Asp-65, Asp-67, Asp-69, Glu-76, Asp-98, Asn-100, Asn-102, Glu-109, Asp-134, Asp-136, Asp-138, Asn-140, and Glu-145.

In terms of biological role, potential calcium sensor. This chain is Probable calcium-binding protein CML26 (CML26), found in Arabidopsis thaliana (Mouse-ear cress).